A 78-amino-acid chain; its full sequence is Ferredoxin 7Fe (78 aa).

2 4Fe-4S ferredoxin-type domains span residues 2–29 (AYVITEPCIGTKDASCVEVCPVDCIHEG) and 31–60 (DQYYIDPDVCIDCGACEAVCPVSAIYHEDF). The [3Fe-4S] cluster site is built by Cys-9 and Cys-17. [4Fe-4S] cluster contacts are provided by Cys-21, Cys-40, Cys-43, and Cys-46. Cys-50 contacts [3Fe-4S] cluster.

As to quaternary structure, monomer. Requires [4Fe-4S] cluster as cofactor. [3Fe-4S] cluster serves as cofactor.

This Hydrogenibacillus schlegelii (Bacillus schlegelii) protein is Ferredoxin 7Fe (fdxA).